The sequence spans 76 residues: uncharacterized protein (76 aa).

This sequence to K.pneumoniae LtrA, E.coli YjiE, and YhcS.

This is an uncharacterized protein from Escherichia coli O6:H1 (strain CFT073 / ATCC 700928 / UPEC).